A 304-amino-acid polypeptide reads, in one-letter code: Ribosomal protein L11 methyltransferase (304 aa).

Residues T152, G173, D195, and N234 each coordinate S-adenosyl-L-methionine.

The protein belongs to the methyltransferase superfamily. PrmA family.

It localises to the cytoplasm. It carries out the reaction L-lysyl-[protein] + 3 S-adenosyl-L-methionine = N(6),N(6),N(6)-trimethyl-L-lysyl-[protein] + 3 S-adenosyl-L-homocysteine + 3 H(+). Its function is as follows. Methylates ribosomal protein L11. In Cupriavidus metallidurans (strain ATCC 43123 / DSM 2839 / NBRC 102507 / CH34) (Ralstonia metallidurans), this protein is Ribosomal protein L11 methyltransferase.